The chain runs to 97 residues: Large ribosomal subunit protein uL23 (97 aa).

This sequence belongs to the universal ribosomal protein uL23 family. In terms of assembly, part of the 50S ribosomal subunit. Contacts protein L29, and trigger factor when it is bound to the ribosome.

Functionally, one of the early assembly proteins it binds 23S rRNA. One of the proteins that surrounds the polypeptide exit tunnel on the outside of the ribosome. Forms the main docking site for trigger factor binding to the ribosome. The chain is Large ribosomal subunit protein uL23 from Anaeromyxobacter dehalogenans (strain 2CP-C).